The chain runs to 520 residues: TnpB-like protein L79 (520 aa).

Positions 21–47 (GSKTKKKVFVKKKPPDKKPLKKPVKKT) are enriched in basic residues. A disordered region spans residues 21–52 (GSKTKKKVFVKKKPPDKKPLKKPVKKTVKTDK). Cys-474, Cys-477, Cys-491, and Cys-494 together coordinate Zn(2+).

It in the central section; belongs to the transposase 2 family. The protein in the C-terminal section; belongs to the transposase 35 family.

The sequence is that of TnpB-like protein L79 from Acanthamoeba polyphaga mimivirus (APMV).